The primary structure comprises 580 residues: Negative elongation factor B (580 aa).

Lys519 carries the N6-acetyllysine modification. A disordered region spans residues 548–580 (LEQLDHRKPSPAQAAETPALELPLPSVPAPAPL). Ser557 carries the phosphoserine modification.

Belongs to the NELF-B family. In terms of assembly, the NELF complex is composed of NELFA, NELFB, NELFCD (isoform NELF-C or isoform NELF-D) and NELFE; the N-terminus of NELFB binds to the NELFA:NELFCD subcomplex. Binds RNA which may help to stabilize the NELF complex on nucleic acid. Interacts with the first BRCT repeat of BRCA1. Interacts with KIAA1191. Interacts with NELFE. As to expression, widely expressed. Expressed in heart, brain, lung, placenta, liver, skeletal muscle, kidney and pancreas.

The protein localises to the nucleus. Essential component of the NELF complex, a complex that negatively regulates the elongation of transcription by RNA polymerase II. The NELF complex, which acts via an association with the DSIF complex and causes transcriptional pausing, is counteracted by the P-TEFb kinase complex. May be able to induce chromatin unfolding. Essential for early embryogenesis; plays an important role in maintaining the undifferentiated state of embryonic stem cells (ESCs) by preventing unscheduled expression of developmental genes. Plays a key role in establishing the responsiveness of stem cells to developmental cues; facilitates plasticity and cell fate commitment in ESCs by establishing the appropriate expression level of signaling molecules. Supports the transcription of genes involved in energy metabolism in cardiomyocytes; facilitates the association of transcription initiation factors with the promoters of the metabolism-related genes. In terms of biological role, (Microbial infection) The NELF complex is involved in HIV-1 latency possibly involving recruitment of PCF11 to paused RNA polymerase II. In vitro, binds weakly to the HIV-1 TAR RNA which is located in the long terminal repeat (LTR) of HIV-1. This is Negative elongation factor B (NELFB) from Homo sapiens (Human).